A 243-amino-acid polypeptide reads, in one-letter code: 1-(5-phosphoribosyl)-5-[(5-phosphoribosylamino)methylideneamino] imidazole-4-carboxamide isomerase (243 aa).

The active-site Proton acceptor is Asp14. Catalysis depends on Asp135, which acts as the Proton donor.

Belongs to the HisA/HisF family.

The protein localises to the cytoplasm. The catalysed reaction is 1-(5-phospho-beta-D-ribosyl)-5-[(5-phospho-beta-D-ribosylamino)methylideneamino]imidazole-4-carboxamide = 5-[(5-phospho-1-deoxy-D-ribulos-1-ylimino)methylamino]-1-(5-phospho-beta-D-ribosyl)imidazole-4-carboxamide. The protein operates within amino-acid biosynthesis; L-histidine biosynthesis; L-histidine from 5-phospho-alpha-D-ribose 1-diphosphate: step 4/9. The chain is 1-(5-phosphoribosyl)-5-[(5-phosphoribosylamino)methylideneamino] imidazole-4-carboxamide isomerase from Rubrobacter xylanophilus (strain DSM 9941 / JCM 11954 / NBRC 16129 / PRD-1).